Here is a 502-residue protein sequence, read N- to C-terminus: ATP-dependent DNA helicase uvsW (502 aa).

One can recognise a Helicase ATP-binding domain in the interval 122 to 280 (VFEGLVNRRR…QYVGMFGEIF (159 aa)). An ATP-binding site is contributed by 135–142 (LPTSAGKS). The short motif at 232–235 (DECH) is the DEAH box element. The Helicase C-terminal domain occupies 335-501 (WIAKLAIKLA…KFNYVMKTVN (167 aa)).

As to quaternary structure, probably interacts with UvsW.1. Interacts with gp32. Requires Mg(2+) as cofactor.

The catalysed reaction is Couples ATP hydrolysis with the unwinding of duplex DNA by translocating in the 3'-5' direction.. It carries out the reaction ATP + H2O = ADP + phosphate + H(+). Unwinding activity is strongly stimulated by single-stranded binding protein gp32, the ssDNA annealing activity is partially inhibited by gp32 and strongly inhibited by ATP-gamma-S. Another study did not find gp32 stimulation of helicase activity. Holliday junction (HJ) branch migration is inhibited by ATP-gamma-S. Functionally, plays important roles in recombination-dependent DNA repair and the reorganization of stalled replication forks during viral DNA synthesis. Active on in vivo-derived T4 DNA; viral DNA is highly modified by hydroxymethylation and glucosylation of cytosine residues. Helps process Holliday junction (HJ) intermediates to mature products by catalyzing branch migration. Probably able to catalyze replication fork regression. Unwinds HJ and Y-branched but not linear double-stranded (ds)DNA; unwinding requires ATP and Mg(2+). Unwinds dsDNA with a 3'-single-stranded (ss)DNA overhang, suggesting it is a 3'-5' helicase. Another study does not find this activity. Unwinds D- and R-loops. Also anneals ssDNA; ATP stimulates annealing. Has ssDNA and dsDNA-stimulated ATPase activity, also hydrolyzes GTP in the presence of DNA. This chain is ATP-dependent DNA helicase uvsW, found in Enterobacteria phage T4 (Bacteriophage T4).